The sequence spans 765 residues: Protein PAT1 homolog 1 (765 aa).

Disordered regions lie at residues 1–98, 119–147, and 210–244; these read MFRF…DERG, GVGSTSSDRSHLPPMLSAHPPHPSALAGP, and LPNRPPSLSRDEGRDLSERVPPPRSSSPVIGSPPV. Acidic residues predominate over residues 7–30; the sequence is LDDDCTLEEEEGLVEEEDEIDQFN. The segment covering 45 to 59 has biased composition (basic and acidic residues); that stretch reads EEHTRLAELDERVRD. The span at 218-227 shows a compositional bias: basic and acidic residues; the sequence is SRDEGRDLSE. Phosphoserine is present on residues Ser235 and Ser236. Over residues 235–244 the composition is skewed to low complexity; it reads SSPVIGSPPV.

Belongs to the PAT1 family. Interacts with ribonucleoprotein complex components.

Its subcellular location is the cytoplasm. It localises to the P-body. It is found in the nucleus. The protein resides in the PML body. The protein localises to the nucleus speckle. RNA-binding protein involved in deadenylation-dependent decapping of mRNAs, leading to the degradation of mRNAs. Acts as a scaffold protein that connects deadenylation and decapping machinery. Required for cytoplasmic mRNA processing body (P-body) assembly. The polypeptide is Protein PAT1 homolog 1 (patl1) (Danio rerio (Zebrafish)).